The chain runs to 500 residues: Maturase K (500 aa).

It belongs to the intron maturase 2 family. MatK subfamily.

The protein resides in the plastid. It localises to the chloroplast. Its function is as follows. Usually encoded in the trnK tRNA gene intron. Probably assists in splicing its own and other chloroplast group II introns. In Fragaria vesca (Woodland strawberry), this protein is Maturase K.